We begin with the raw amino-acid sequence, 213 residues long: Superoxide dismutase [Fe] (213 aa).

Residues H26, H73, D156, and H160 each contribute to the Fe cation site.

Belongs to the iron/manganese superoxide dismutase family. In terms of assembly, homodimer. Fe cation is required as a cofactor.

It catalyses the reaction 2 superoxide + 2 H(+) = H2O2 + O2. Functionally, destroys superoxide anion radicals which are normally produced within the cells and which are toxic to biological systems. This Helicobacter pylori (strain J99 / ATCC 700824) (Campylobacter pylori J99) protein is Superoxide dismutase [Fe] (sodB).